A 431-amino-acid polypeptide reads, in one-letter code: POU domain, class 2, transcription factor 3 (431 aa).

Disordered stretches follow at residues 1–39 (MVNLEPMHTEIKMSGDVADSTDTRSTFGQVEPGNDRNGL), 130–180 (LLPQ…EPTD), and 248–267 (DAESSPSDPSASTPSSYPTL). In terms of domain architecture, POU-specific spans 176–250 (DEPTDLEELE…LLEKWLNDAE (75 aa)). A compositionally biased stretch (low complexity) spans 251 to 267 (SSPSDPSASTPSSYPTL). A DNA-binding region (homeobox) is located at residues 274–333 (KRKKRTSIETNIRLTLEKRFQDNPKPSSEEISMIAEQLSMEKEVVRVWFCNRRQKEKRIN). 3 stretches are compositionally biased toward low complexity: residues 352-364 (PSGSLGPLSVPPV), 374-390 (SSCSPGNNSRPSSPGSG), and 398-419 (ASQNNSKAAMNSSSSSSFNSSG). The disordered stretch occupies residues 352–419 (PSGSLGPLSV…SSSSSFNSSG (68 aa)).

It belongs to the POU transcription factor family. Class-2 subfamily. As to quaternary structure, interacts (via the POU domain) with POU2AF1 and POU2AF2 in a DNA-dependent manner; this interaction recruits POU2AF2 to chromatin and increases POU2F3 transactivation activity. Skin, thymus, stomach and testis.

The protein resides in the nucleus. Transcription factor that binds to the octamer motif (5'-ATTTGCAT-3'). Regulates cell type-specific differentiation pathways. Involved in the regulation of keratinocytes differentiation. The POU2F3-POU2AF2/POU2AF3 complex drives the expression of tuft-cell-specific genes, a rare chemosensory cells that coordinate immune and neural functions within mucosal epithelial tissues. The sequence is that of POU domain, class 2, transcription factor 3 (Pou2f3) from Mus musculus (Mouse).